A 241-amino-acid polypeptide reads, in one-letter code: Carboxy-S-adenosyl-L-methionine synthase (241 aa).

Residues Y38, 63–65 (GCS), 88–89 (DN), 116–117 (DI), N131, and R198 contribute to the S-adenosyl-L-methionine site.

Belongs to the class I-like SAM-binding methyltransferase superfamily. Cx-SAM synthase family. Homodimer.

It carries out the reaction prephenate + S-adenosyl-L-methionine = carboxy-S-adenosyl-L-methionine + 3-phenylpyruvate + H2O. Functionally, catalyzes the conversion of S-adenosyl-L-methionine (SAM) to carboxy-S-adenosyl-L-methionine (Cx-SAM). The sequence is that of Carboxy-S-adenosyl-L-methionine synthase from Glaesserella parasuis serovar 5 (strain SH0165) (Haemophilus parasuis).